The sequence spans 320 residues: Na(+)-translocating NADH-quinone reductase subunit C (320 aa).

The chain crosses the membrane as a helical span at residues 16–36 (WYIVSFILGLSLFAGVLLSTI). T285 bears the FMN phosphoryl threonine mark.

Belongs to the NqrC family. Composed of six subunits; NqrA, NqrB, NqrC, NqrD, NqrE and NqrF. The cofactor is FMN.

It is found in the cell inner membrane. It catalyses the reaction a ubiquinone + n Na(+)(in) + NADH + H(+) = a ubiquinol + n Na(+)(out) + NAD(+). In terms of biological role, NQR complex catalyzes the reduction of ubiquinone-1 to ubiquinol by two successive reactions, coupled with the transport of Na(+) ions from the cytoplasm to the periplasm. NqrA to NqrE are probably involved in the second step, the conversion of ubisemiquinone to ubiquinol. The chain is Na(+)-translocating NADH-quinone reductase subunit C from Chlamydia pneumoniae (Chlamydophila pneumoniae).